A 665-amino-acid polypeptide reads, in one-letter code: Golgi-associated RAB2B interactor protein 3 (665 aa).

Disordered regions lie at residues 211 to 240 (EIRG…AGGE), 272 to 296 (AAAG…GTAG), and 480 to 590 (SEGY…GSVS). Residues 219–232 (NSRPQSSPTVSEAT) show a composition bias toward polar residues. The segment covering 499–513 (EAKEKRERREKDRTS) has biased composition (basic and acidic residues). Basic residues-rich tracts occupy residues 514 to 538 (SRKS…RKTS) and 554 to 566 (GHGR…HSSS). A Bipartite nuclear localization signal motif is present at residues 515–531 (RKSSHHRRTGMSRHSSK). The residue at position 652 (S652) is a Phosphoserine.

This sequence belongs to the GARIN family. In terms of assembly, interacts (via N-terminus) with RAB2B (in GTP-bound form). Interacts with FRG1. Expressed in adult spermatocytes and spermatids.

It is found in the golgi apparatus. Its subcellular location is the nucleus. It localises to the cajal body. Functionally, may be involved in RNA biogenesis. The sequence is that of Golgi-associated RAB2B interactor protein 3 from Mus musculus (Mouse).